The following is a 224-amino-acid chain: CASP-like protein 3A1 (224 aa).

Residues 1-59 (MMMNGQKLAPAAEVAVQLPESKVAADNISGTMSGPLVGASGGGTTAAMRPFGRKAEVMH) lie on the Cytoplasmic side of the membrane. A helical transmembrane segment spans residues 60–80 (VLLRLLCIITSVAALSFMFTA). Residues 81 to 106 (QQSSTISIYGFMLPVQSKWSFSHSFE) are Extracellular-facing. A helical membrane pass occupies residues 107 to 127 (YLVGVSAAVAAHSLLQLLISM). Topologically, residues 128–142 (SRLLRKSPVIPSRSH) are cytoplasmic. The helical transmembrane segment at 143 to 163 (AWLIFAGDQVFAYAMISAGAA) threads the bilayer. The Extracellular portion of the chain corresponds to 164–192 (ASGVTNLNRTGIQHTALPNFCKPLQSFCD). N171 carries N-linked (GlcNAc...) asparagine glycosylation. A helical transmembrane segment spans residues 193 to 213 (HVAVSIFFTFTSCFLLAASAV). Residues 214 to 224 (QEVIWLSRSKY) are Cytoplasmic-facing.

Belongs to the Casparian strip membrane proteins (CASP) family. As to quaternary structure, homodimer and heterodimers.

It localises to the cell membrane. This Populus trichocarpa (Western balsam poplar) protein is CASP-like protein 3A1.